The primary structure comprises 614 residues: Chaperone protein DnaK (614 aa).

The residue at position 174 (Thr174) is a Phosphothreonine; by autocatalysis. The tract at residues 576-614 is disordered; the sequence is QTGGAAPGPDMGADPGAGGAQGDDNVVDAEYTEVDKDQK. Low complexity predominate over residues 578–589; that stretch reads GGAAPGPDMGAD.

Belongs to the heat shock protein 70 family.

Functionally, acts as a chaperone. In Desulfitobacterium hafniense (strain DSM 10664 / DCB-2), this protein is Chaperone protein DnaK.